A 430-amino-acid polypeptide reads, in one-letter code: tRNA-2-methylthio-N(6)-dimethylallyladenosine synthase (430 aa).

The region spanning 2–111 (KKIHIKTYGC…IPQAVERAIN (110 aa)) is the MTTase N-terminal domain. [4Fe-4S] cluster is bound by residues C11, C47, C76, C147, C151, and C154. A Radical SAM core domain is found at 133-364 (RNSKHHAWIT…LNLQKEINKQ (232 aa)). The 62-residue stretch at 367–428 (ENYLNKTVEI…AGPLYGDIIK (62 aa)) folds into the TRAM domain.

Belongs to the methylthiotransferase family. MiaB subfamily. As to quaternary structure, monomer. It depends on [4Fe-4S] cluster as a cofactor.

It is found in the cytoplasm. It catalyses the reaction N(6)-dimethylallyladenosine(37) in tRNA + (sulfur carrier)-SH + AH2 + 2 S-adenosyl-L-methionine = 2-methylsulfanyl-N(6)-dimethylallyladenosine(37) in tRNA + (sulfur carrier)-H + 5'-deoxyadenosine + L-methionine + A + S-adenosyl-L-homocysteine + 2 H(+). In terms of biological role, catalyzes the methylthiolation of N6-(dimethylallyl)adenosine (i(6)A), leading to the formation of 2-methylthio-N6-(dimethylallyl)adenosine (ms(2)i(6)A) at position 37 in tRNAs that read codons beginning with uridine. The sequence is that of tRNA-2-methylthio-N(6)-dimethylallyladenosine synthase from Thermosipho melanesiensis (strain DSM 12029 / CIP 104789 / BI429).